A 433-amino-acid chain; its full sequence is D-amino acid dehydrogenase (433 aa).

An FAD-binding site is contributed by 3 to 17 (VLVLGSGVIGTTSAY).

Belongs to the DadA oxidoreductase family. FAD serves as cofactor.

It carries out the reaction a D-alpha-amino acid + A + H2O = a 2-oxocarboxylate + AH2 + NH4(+). Oxidative deamination of D-amino acids. This is D-amino acid dehydrogenase from Pseudomonas syringae pv. tomato (strain ATCC BAA-871 / DC3000).